The following is a 309-amino-acid chain: Coproporphyrin III ferrochelatase (309 aa).

Fe-coproporphyrin III contacts are provided by residues Tyr12, Arg29, 45 to 46 (RY), Ser53, and Tyr124. Positions 182 and 263 each coordinate Fe(2+).

Belongs to the ferrochelatase family.

The protein localises to the cytoplasm. It catalyses the reaction Fe-coproporphyrin III + 2 H(+) = coproporphyrin III + Fe(2+). The protein operates within porphyrin-containing compound metabolism; protoheme biosynthesis. In terms of biological role, involved in coproporphyrin-dependent heme b biosynthesis. Catalyzes the insertion of ferrous iron into coproporphyrin III to form Fe-coproporphyrin III. The sequence is that of Coproporphyrin III ferrochelatase from Listeria innocua serovar 6a (strain ATCC BAA-680 / CLIP 11262).